The following is a 279-amino-acid chain: Undecaprenyl-diphosphatase (279 aa).

Transmembrane regions (helical) follow at residues 45–65 (FVEM…IVIY), 85–105 (WQLW…ALPF), 113–133 (FNFM…FIWV), 188–208 (SVAA…YSGL), 226–246 (LILL…IRFL), and 255–275 (FTIF…YWLV).

The protein belongs to the UppP family.

It localises to the cell membrane. The catalysed reaction is di-trans,octa-cis-undecaprenyl diphosphate + H2O = di-trans,octa-cis-undecaprenyl phosphate + phosphate + H(+). Its function is as follows. Catalyzes the dephosphorylation of undecaprenyl diphosphate (UPP). Confers resistance to bacitracin. The chain is Undecaprenyl-diphosphatase from Streptococcus agalactiae serotype Ia (strain ATCC 27591 / A909 / CDC SS700).